The following is a 181-amino-acid chain: Shikimate kinase 2 (181 aa).

G12–T17 is an ATP binding site. Positions 16 and 32 each coordinate Mg(2+). The substrate site is built by D34, R58, and G79. Residues E112–K126 form an LID domain region. R120 serves as a coordination point for ATP. Residue R139 participates in substrate binding.

It belongs to the shikimate kinase family. AroL subfamily. Monomer. The cofactor is Mg(2+).

It localises to the cytoplasm. It carries out the reaction shikimate + ATP = 3-phosphoshikimate + ADP + H(+). Its pathway is metabolic intermediate biosynthesis; chorismate biosynthesis; chorismate from D-erythrose 4-phosphate and phosphoenolpyruvate: step 5/7. Functionally, catalyzes the specific phosphorylation of the 3-hydroxyl group of shikimic acid using ATP as a cosubstrate. This Salmonella dublin (strain CT_02021853) protein is Shikimate kinase 2.